The primary structure comprises 192 residues: Signal peptidase complex catalytic subunit sec11 (192 aa).

Residues 1-18 lie on the Cytoplasmic side of the membrane; it reads MLSFLSSNLSSTRQSLAQ. The helical; Signal-anchor for type II membrane protein transmembrane segment at 19–39 threads the bilayer; it reads VLNFALVLSTAFMLWKGLSVF. Topologically, residues 40–192 are lumenal; the sequence is TASSSPIVVV…GLMVILQREQ (153 aa). Residues Ser-53, His-92, and Asp-133 each act as charge relay system in the active site. A C-terminal short (CTS) helix region spans residues 177-188; the sequence is VLLGIMGLMVIL.

This sequence belongs to the peptidase S26B family. In terms of assembly, component of the signal peptidase complex (SPC) composed of a catalytic subunit SEC11 and three accessory subunits SPC1, SPC2 and SPC3. The complex induces a local thinning of the ER membrane which is used to measure the length of the signal peptide (SP) h-region of protein substrates. This ensures the selectivity of the complex towards h-regions shorter than 18-20 amino acids. SPC associates with the translocon complex.

It is found in the endoplasmic reticulum membrane. It carries out the reaction Cleavage of hydrophobic, N-terminal signal or leader sequences from secreted and periplasmic proteins.. Its function is as follows. Catalytic component of the signal peptidase complex (SPC) which catalyzes the cleavage of N-terminal signal sequences from nascent proteins as they are translocated into the lumen of the endoplasmic reticulum. Specifically cleaves N-terminal signal peptides that contain a hydrophobic alpha-helix (h-region) shorter than 18-20 amino acids. The sequence is that of Signal peptidase complex catalytic subunit sec11 (sec11) from Aspergillus clavatus (strain ATCC 1007 / CBS 513.65 / DSM 816 / NCTC 3887 / NRRL 1 / QM 1276 / 107).